Reading from the N-terminus, the 361-residue chain is AT-hook motif nuclear-localized protein 12 (361 aa).

2 disordered regions span residues 29-143 and 286-361; these read SQVA…GRKQ and NNKT…LTRG. Polar residues predominate over residues 48-59; sequence SNPNIHHPQANN. Positions 85–95 are enriched in pro residues; the sequence is QPPPPPPPPEE. The Bipartite nuclear localization signal signature appears at 99–107; the sequence is KRKRGRPRK. 2 consecutive DNA-binding regions (a.T hook) follow at residues 99–111 and 130–142; these read KRKR…YGEP and KRAR…TGRK. The PPC domain occupies 154-297; it reads TSAGLAFAPH…KTIRQEKEPN (144 aa). Residues 306 to 322 are compositionally biased toward low complexity; sequence ETTPGSAAEPAASAGQQ.

In terms of assembly, homodimer. Interacts with AHL27, AHL29 and ATAF2/NAC081.

Its subcellular location is the nucleus. In terms of biological role, transcription factor that specifically binds AT-rich DNA sequences related to the nuclear matrix attachment regions (MARs). The sequence is that of AT-hook motif nuclear-localized protein 12 from Arabidopsis thaliana (Mouse-ear cress).